We begin with the raw amino-acid sequence, 449 residues long: MVFCLENEMPHRLLGSAMVHFHASEVQQLLHNKFVVILGDSIQRAVYKDLVLLLQKDTLLTASQLKAKGELSFEQDQLVAGGQLGELHNGTQYREVRQFCSGSGHHLVRFYFLTRVYSEYLEDILEELSYGPAPDLVIINSCLWDLSRYGRCSMESYRENLERVFVRMDQVLPDSCLLVWNLAMPLGERVTGGFLLPELQPLAVSLRQDVVEGNFYSATLAGKHCFDVLDLHFHFRHAVRHRHRDGVHWDQHAHRHLSHLLLAHVADAWGVELPKHDRLPDPWIEDWSEMDHSFQGSHKQPPDFREKLALPLLPPFHLPPPMSFPYPLEPSPPPLFPPLPQDTPFFQGQPFPPYEFKYNAMEDFSMPGCGPGMNFVPGPLPPSVSGPVSHGQHRGPVVHRGKPRCVLNNPYHVPRIGGPCRHRLRHSDRLIHTYKQDRRGHAHSGTWPG.

It belongs to the PC-esterase family.

This Mus musculus (Mouse) protein is PC-esterase domain-containing protein 1A (Pced1a).